Consider the following 492-residue polypeptide: 5-taurinomethyluridine-[tRNA] synthase subunit GTPB3, mitochondrial (492 aa).

The transit peptide at Met1 to Cys20 directs the protein to the mitochondrion. The 5,10-methylenetetrahydrofolate site is built by Arg52, Glu112, and Lys152. Positions Gly249 to Ala416 constitute a TrmE-type G domain. GTP is bound by residues Gly256–Ser263, Gly282–Asp286, Asp303–Gly306, and Asn374–Asp377. K(+) is bound at residue Asn259. Positions 263 and 284 each coordinate Mg(2+). Lys492 provides a ligand contact to 5,10-methylenetetrahydrofolate.

The protein belongs to the TRAFAC class TrmE-Era-EngA-EngB-Septin-like GTPase superfamily. TrmE GTPase family. In terms of assembly, homodimer; forms a dimer in the presence of potassium. Interacts with MTO1; forms the GTPBP3-MTO1 complex composed of homodimers of GTPBP3 and MTO1. It depends on K(+) as a cofactor.

The protein localises to the mitochondrion. The enzyme catalyses GTP + H2O = GDP + phosphate + H(+). In terms of biological role, GTPase component of the GTPBP3-MTO1 complex that catalyzes the 5-taurinomethyluridine (taum(5)U) modification at the 34th wobble position (U34) of mitochondrial tRNAs (mt-tRNAs), which plays a role in mt-tRNA decoding and mitochondrial translation. Taum(5)U formation on mammalian mt-tRNA requires the presence of both GTPBP3-mediated GTPase activity and MTO1 catalytic activity. This chain is 5-taurinomethyluridine-[tRNA] synthase subunit GTPB3, mitochondrial, found in Rattus norvegicus (Rat).